We begin with the raw amino-acid sequence, 160 residues long: Transcription elongation factor GreA (160 aa).

Residues 1-71 (MAEKTYPMTL…GQISTLETKI (71 aa)) adopt a coiled-coil conformation.

The protein belongs to the GreA/GreB family.

Necessary for efficient RNA polymerase transcription elongation past template-encoded arresting sites. The arresting sites in DNA have the property of trapping a certain fraction of elongating RNA polymerases that pass through, resulting in locked ternary complexes. Cleavage of the nascent transcript by cleavage factors such as GreA or GreB allows the resumption of elongation from the new 3'terminus. GreA releases sequences of 2 to 3 nucleotides. This Streptococcus pyogenes serotype M3 (strain ATCC BAA-595 / MGAS315) protein is Transcription elongation factor GreA.